The primary structure comprises 1134 residues: Myosin-4 (1134 aa).

The region spanning 110-160 (REKLCVWCRVAANGQWHLGKIHSTSSSDDVCVMLSANDDVRTMEEIFPANP) is the Myosin N-terminal SH3-like domain. The Myosin motor domain maps to 164–830 (EGVEDLTQLS…VISVLEERKK (667 aa)). ATP is bound by residues 255-262 (GESGAGKT) and 304-312 (NDNSSRFGK). Actin-binding regions lie at residues 589-623 (LIEKKPIGLVSLLNEESNFPKATDTTFANKLKQHL) and 710-732 (LFKLMNKLEDTTPHFIRCIKPNS). 3 IQ domains span residues 832–861 (VLRGILGLQKQFRGYQTREYFHNMRNAAVI), 855–884 (MRNAAVILQSYIRGENARRNYIVVGESAIV), and 891–920 (ELDAAIHLQYMVRKWLARKLLNSTQQKNKP). The tract at residues 913-939 (STQQKNKPRNEKKKTRRKSTKRVSEDK) is disordered. Residues 918–933 (NKPRNEKKKTRRKSTK) show a composition bias toward basic residues. Residues 953–999 (LADLQSRVLKVEAAIMQKEDENTALQEELQRFEERWLENETRMKSME) are a coiled coil.

The protein belongs to the TRAFAC class myosin-kinesin ATPase superfamily. Myosin family. Plant myosin class VIII subfamily. Homodimer.

Myosin heavy chain that is required for the cell cycle-regulated transport of various organelles and proteins for their segregation. Functions by binding with its tail domain to receptor proteins on organelles and exerting force with its N-terminal motor domain against actin filaments, thereby transporting its cargo along polarized actin cables. In Arabidopsis thaliana (Mouse-ear cress), this protein is Myosin-4 (VIII-B).